The sequence spans 337 residues: Glyceraldehyde-3-phosphate dehydrogenase 1, cytosolic (337 aa).

The interval 1 to 151 is binding to NAD; the sequence is MGKIKIGING…YTSDVNIVSN (151 aa). Residues 13–14, aspartate 35, and arginine 82 each bind NAD(+); that span reads RI. Residues 152-337 form a catalytic region; it reads ASCTTNCLAP…DLIRHMFKTQ (186 aa). D-glyceraldehyde 3-phosphate-binding positions include 153-155, threonine 184, 213-214, and arginine 236; these read SCT and TG. Catalysis depends on cysteine 154, which acts as the Nucleophile. Asparagine 318 lines the NAD(+) pocket.

This sequence belongs to the glyceraldehyde-3-phosphate dehydrogenase family. Homotetramer.

It localises to the cytoplasm. It catalyses the reaction D-glyceraldehyde 3-phosphate + phosphate + NAD(+) = (2R)-3-phospho-glyceroyl phosphate + NADH + H(+). The protein operates within carbohydrate degradation; glycolysis; pyruvate from D-glyceraldehyde 3-phosphate: step 1/5. Its function is as follows. Key enzyme in glycolysis that catalyzes the first step of the pathway by converting D-glyceraldehyde 3-phosphate (G3P) into 3-phospho-D-glyceroyl phosphate. Essential for the maintenance of cellular ATP levels and carbohydrate metabolism. The chain is Glyceraldehyde-3-phosphate dehydrogenase 1, cytosolic (GAPC1) from Zea mays (Maize).